We begin with the raw amino-acid sequence, 214 residues long: Adenylate kinase (214 aa).

10–15 (GAGKGT) contacts ATP. The segment at 30 to 59 (STGDMLRAAIKAGTELGKQAKSVIDAGQLV) is NMP. AMP-binding positions include threonine 31, arginine 36, 57 to 59 (QLV), 85 to 88 (GFPR), and glutamine 92. Residues 122 to 159 (GRRAHLASGRTYHNVYNPPKVEGKDDVTGEDLVIREDD) form an LID region. ATP contacts are provided by residues arginine 123 and 132 to 133 (TY). AMP-binding residues include arginine 156 and arginine 167. Lysine 200 lines the ATP pocket.

This sequence belongs to the adenylate kinase family. In terms of assembly, monomer.

Its subcellular location is the cytoplasm. It catalyses the reaction AMP + ATP = 2 ADP. Its pathway is purine metabolism; AMP biosynthesis via salvage pathway; AMP from ADP: step 1/1. Functionally, catalyzes the reversible transfer of the terminal phosphate group between ATP and AMP. Plays an important role in cellular energy homeostasis and in adenine nucleotide metabolism. This chain is Adenylate kinase, found in Photobacterium profundum (strain SS9).